The primary structure comprises 302 residues: Glutaminase (302 aa).

Substrate is bound by residues Ser61, Asn111, Glu155, Asn162, Tyr186, Tyr238, and Val256.

It belongs to the glutaminase family. Homotetramer.

The enzyme catalyses L-glutamine + H2O = L-glutamate + NH4(+). The chain is Glutaminase from Pseudomonas savastanoi pv. phaseolicola (strain 1448A / Race 6) (Pseudomonas syringae pv. phaseolicola (strain 1448A / Race 6)).